Consider the following 429-residue polypeptide: UDP-N-acetylglucosamine 1-carboxyvinyltransferase (429 aa).

Position 22–23 (K22–N23) interacts with phosphoenolpyruvate. R102 serves as a coordination point for UDP-N-acetyl-alpha-D-glucosamine. Residue C126 is the Proton donor of the active site. A 2-(S-cysteinyl)pyruvic acid O-phosphothioketal modification is found at C126. Residues R131–L135, D316, and I338 each bind UDP-N-acetyl-alpha-D-glucosamine.

It belongs to the EPSP synthase family. MurA subfamily.

It is found in the cytoplasm. It catalyses the reaction phosphoenolpyruvate + UDP-N-acetyl-alpha-D-glucosamine = UDP-N-acetyl-3-O-(1-carboxyvinyl)-alpha-D-glucosamine + phosphate. It participates in cell wall biogenesis; peptidoglycan biosynthesis. Cell wall formation. Adds enolpyruvyl to UDP-N-acetylglucosamine. The chain is UDP-N-acetylglucosamine 1-carboxyvinyltransferase from Rhodopseudomonas palustris (strain HaA2).